Reading from the N-terminus, the 109-residue chain is uncharacterized protein (109 aa).

This is an uncharacterized protein from Enterobacteria phage T4 (Bacteriophage T4).